The following is a 126-amino-acid chain: Acidic phospholipase A2 2 (126 aa).

Residues 1–7 constitute a propeptide that is removed on maturation; that stretch reads SNRPMPL. 7 cysteine pairs are disulfide-bonded: C18–C78, C33–C125, C35–C51, C50–C106, C57–C99, C67–C92, and C85–C97. Residues Y34, G36, and G38 each contribute to the Ca(2+) site. H54 is an active-site residue. Residue D55 participates in Ca(2+) binding. D100 is a catalytic residue.

Belongs to the phospholipase A2 family. Group I subfamily. D49 sub-subfamily. Heterodimer formed between two homologous isoforms: isoform 1 and isoform 2. Requires Ca(2+) as cofactor. Expressed by the venom gland.

It is found in the secreted. It carries out the reaction a 1,2-diacyl-sn-glycero-3-phosphocholine + H2O = a 1-acyl-sn-glycero-3-phosphocholine + a fatty acid + H(+). Its function is as follows. PLA2 catalyzes the calcium-dependent hydrolysis of the 2-acyl groups in 3-sn-phosphoglycerides. The protein is Acidic phospholipase A2 2 of Naja sagittifera (Andaman cobra).